The primary structure comprises 266 residues: Undecaprenyl-diphosphatase (266 aa).

The next 8 helical transmembrane spans lie at 1–21, 39–59, 86–106, 117–137, 153–173, 190–210, 216–236, and 246–266; these read MDFLKFIFYGIIQGLTEFIPV, PGSSLSAIIQIGSVLAIFWYF, SIFIGTIPIVLIGGIVKLFVT, FSIAVVSILMSLIMFLADIST, FIGISQAFAIIPGVSRSGATI, SFLLGIPSISLAAFVEFITSI, FPFLPLFVGLITTFFSSLLAI, and NGLKIFIYYRLVFGILIILNL.

Belongs to the UppP family.

The protein localises to the cell inner membrane. It carries out the reaction di-trans,octa-cis-undecaprenyl diphosphate + H2O = di-trans,octa-cis-undecaprenyl phosphate + phosphate + H(+). Its function is as follows. Catalyzes the dephosphorylation of undecaprenyl diphosphate (UPP). Confers resistance to bacitracin. In Prochlorococcus marinus (strain MIT 9515), this protein is Undecaprenyl-diphosphatase.